A 245-amino-acid polypeptide reads, in one-letter code: Complement C1q subcomponent subunit C (245 aa).

The signal sequence occupies residues 1–28 (MVVGTSCQPQHGLYLLLLLLALPLRSQA). The Collagen-like domain maps to 31–112 (GCYGIPGMPG…GPPGEPGEEG (82 aa)). Pro36, Pro39, Pro42, Pro45, and Pro63 each carry 4-hydroxyproline. The disordered stretch occupies residues 42-119 (PGTPGKDGHD…EEGRYKQKHQ (78 aa)). Lys75 is subject to 5-hydroxylysine. A glycan (O-linked (Gal...) hydroxylysine) is linked at Lys75. 4 positions are modified to 4-hydroxyproline: Pro81, Pro96, Pro99, and Pro105. The segment covering 98–107 (DPGPRGPPGE) has biased composition (pro residues). Residues 115–245 (KQKHQSVFTV…VFSGFLLFPD (131 aa)) form the C1q domain. Cysteines 179 and 193 form a disulfide.

In terms of assembly, core component of the complement C1 complex, a calcium-dependent complex composed of 1 molecule of the C1Q subcomplex, 2 molecules of C1R and 2 molecules of C1S. The C1Q subcomplex is composed 18 subunits: 3 chains of C1QA, C1QB, and C1QC trimerize to form 6 collagen-like triple helices connected to six globular ligand-recognition modules (C1q domain). In terms of processing, O-linked glycans consist of Glc-Gal disaccharides bound to the oxygen atom of post-translationally added hydroxyl groups.

It is found in the secreted. Its subcellular location is the cell surface. The C1Q subcomplex is inhibited by sulfated molecules, such as triterpenoid sulfates, heparan sulfate, or chondroitin sulfates. Core component of the complement C1 complex, a multiprotein complex that initiates the classical pathway of the complement system, a cascade of proteins that leads to phagocytosis and breakdown of pathogens and signaling that strengthens the adaptive immune system. The classical complement pathway is initiated by the C1Q subcomplex of the C1 complex, which specifically binds IgG or IgM immunoglobulins complexed with antigens, forming antigen-antibody complexes on the surface of pathogens: C1QA, together with C1QB and C1QC, specifically recognizes and binds the Fc regions of IgG or IgM via its C1q domain. Immunoglobulin-binding activates the proenzyme C1R, which cleaves C1S, initiating the proteolytic cascade of the complement system. The C1Q subcomplex is activated by a hexamer of IgG complexed with antigens, while it is activated by a pentameric IgM. The C1Q subcomplex also recognizes and binds phosphatidylserine exposed on the surface of cells undergoing programmed cell death, possibly promoting activation of the complement system. The protein is Complement C1q subcomponent subunit C of Rattus norvegicus (Rat).